The chain runs to 234 residues: Thiamine import ATP-binding protein ThiQ (234 aa).

The region spanning 2 to 230 (LTLQQVHYYY…HSHPELVEFF (229 aa)) is the ABC transporter domain. ATP is bound at residue 32–39 (GPSGAGKS).

Belongs to the ABC transporter superfamily. Thiamine importer (TC 3.A.1.19.1) family. In terms of assembly, the complex is composed of two ATP-binding proteins (ThiQ), two transmembrane proteins (ThiP) and a solute-binding protein (ThiB).

It is found in the cell inner membrane. The enzyme catalyses thiamine(out) + ATP + H2O = thiamine(in) + ADP + phosphate + H(+). In terms of biological role, part of the ABC transporter complex ThiBPQ involved in thiamine import. Responsible for energy coupling to the transport system. This chain is Thiamine import ATP-binding protein ThiQ, found in Vibrio vulnificus (strain CMCP6).